The chain runs to 579 residues: Glutamine--tRNA ligase (579 aa).

A 'HIGH' region motif is present at residues proline 41–histidine 51. ATP is bound by residues glutamate 42–asparagine 44 and histidine 48–alanine 54. L-glutamine-binding residues include aspartate 74 and tyrosine 218. Residues threonine 237, arginine 285 to leucine 286, and methionine 293 to lysine 295 contribute to the ATP site. The short motif at valine 292–arginine 296 is the 'KMSKS' region element.

Belongs to the class-I aminoacyl-tRNA synthetase family. As to quaternary structure, monomer.

It localises to the cytoplasm. The catalysed reaction is tRNA(Gln) + L-glutamine + ATP = L-glutaminyl-tRNA(Gln) + AMP + diphosphate. In Xanthomonas axonopodis pv. citri (strain 306), this protein is Glutamine--tRNA ligase.